Here is a 142-residue protein sequence, read N- to C-terminus: Gonadotropin subunit beta-2 (142 aa).

A signal peptide spans Met1 to Gly24. Disulfide bonds link Cys30–Cys78, Cys44–Cys93, Cys47–Cys131, Cys55–Cys109, Cys59–Cys111, and Cys114–Cys121. Asn34 carries N-linked (GlcNAc...) asparagine glycosylation.

It belongs to the glycoprotein hormones subunit beta family. Heterodimer of an alpha and a beta chain.

It is found in the secreted. Functionally, involved in gametogenesis and steroidogenesis. This is Gonadotropin subunit beta-2 (cgbb) from Coregonus autumnalis (Arctic cisco).